The chain runs to 434 residues: D-amino acid dehydrogenase (434 aa).

3–17 provides a ligand contact to FAD; the sequence is VLVLGSGVIGTASAY.

Belongs to the DadA oxidoreductase family. FAD serves as cofactor.

It carries out the reaction a D-alpha-amino acid + A + H2O = a 2-oxocarboxylate + AH2 + NH4(+). The protein operates within amino-acid degradation; D-alanine degradation; NH(3) and pyruvate from D-alanine: step 1/1. Its function is as follows. Oxidative deamination of D-amino acids. This chain is D-amino acid dehydrogenase, found in Pseudomonas putida (strain GB-1).